Reading from the N-terminus, the 296-residue chain is Phosphoribosylaminoimidazole-succinocarboxamide synthase (296 aa).

Belongs to the SAICAR synthetase family.

It catalyses the reaction 5-amino-1-(5-phospho-D-ribosyl)imidazole-4-carboxylate + L-aspartate + ATP = (2S)-2-[5-amino-1-(5-phospho-beta-D-ribosyl)imidazole-4-carboxamido]succinate + ADP + phosphate + 2 H(+). It functions in the pathway purine metabolism; IMP biosynthesis via de novo pathway; 5-amino-1-(5-phospho-D-ribosyl)imidazole-4-carboxamide from 5-amino-1-(5-phospho-D-ribosyl)imidazole-4-carboxylate: step 1/2. This is Phosphoribosylaminoimidazole-succinocarboxamide synthase from Thioalkalivibrio sulfidiphilus (strain HL-EbGR7).